The primary structure comprises 158 residues: 2-C-methyl-D-erythritol 2,4-cyclodiphosphate synthase (158 aa).

A divalent metal cation-binding residues include Asp-9 and His-11. 4-CDP-2-C-methyl-D-erythritol 2-phosphate contacts are provided by residues 9–11 (DVH) and 35–36 (HS). His-43 contributes to the a divalent metal cation binding site. Residues 57-59 (DLG), 62-66 (FPDTD), 133-136 (TTTE), Phe-140, and Arg-143 each bind 4-CDP-2-C-methyl-D-erythritol 2-phosphate.

The protein belongs to the IspF family. As to quaternary structure, homotrimer. The cofactor is a divalent metal cation.

It carries out the reaction 4-CDP-2-C-methyl-D-erythritol 2-phosphate = 2-C-methyl-D-erythritol 2,4-cyclic diphosphate + CMP. It participates in isoprenoid biosynthesis; isopentenyl diphosphate biosynthesis via DXP pathway; isopentenyl diphosphate from 1-deoxy-D-xylulose 5-phosphate: step 4/6. Its function is as follows. Involved in the biosynthesis of isopentenyl diphosphate (IPP) and dimethylallyl diphosphate (DMAPP), two major building blocks of isoprenoid compounds. Catalyzes the conversion of 4-diphosphocytidyl-2-C-methyl-D-erythritol 2-phosphate (CDP-ME2P) to 2-C-methyl-D-erythritol 2,4-cyclodiphosphate (ME-CPP) with a corresponding release of cytidine 5-monophosphate (CMP). This Desulfitobacterium hafniense (strain DSM 10664 / DCB-2) protein is 2-C-methyl-D-erythritol 2,4-cyclodiphosphate synthase.